A 233-amino-acid polypeptide reads, in one-letter code: LOB domain-containing protein 40 (233 aa).

Residues 3 to 109 (MSCNGCRVLR…VEAVMRGSPV (107 aa)) form the LOB domain. The span at 143-160 (KRRSRGACKEERNVRSLS) shows a compositional bias: basic and acidic residues. A disordered region spans residues 143-183 (KRRSRGACKEERNVRSLSHESSLSHESPVSSEETTTEEPKT). Low complexity predominate over residues 161–175 (HESSLSHESPVSSEE).

This sequence belongs to the LOB domain-containing protein family. In terms of tissue distribution, expressed in roots and flowers.

The sequence is that of LOB domain-containing protein 40 (LBD40) from Arabidopsis thaliana (Mouse-ear cress).